The following is a 770-amino-acid chain: Glutamate carboxypeptidase 2 homolog (770 aa).

The Cytoplasmic segment spans residues 1 to 19 (MPYVGVGAQKASTNLTGGP). A helical; Signal-anchor for type II membrane protein transmembrane segment spans residues 20–40 (MMKAYAFVLAFFLLGLGVLAL). Over 41–770 (GKHHSGRRFN…CVVNTLRDVI (730 aa)) the chain is Extracellular. Asn175 and Asn337 each carry an N-linked (GlcNAc...) asparagine glycan. Positions 282–597 (SKKELFKGRT…QYWAELAKTF (316 aa)) are catalytic. Positions 387 and 397 each coordinate Zn(2+). A glycan (N-linked (GlcNAc...) asparagine) is linked at Asn417. The active-site Nucleophile is the Glu435. Residues Glu436 and Asp464 each contribute to the Zn(2+) site. 2 N-linked (GlcNAc...) asparagine glycosylation sites follow: Asn469 and Asn551. His562 serves as a coordination point for Zn(2+). N-linked (GlcNAc...) asparagine glycans are attached at residues Asn606 and Asn630.

Belongs to the peptidase M28 family. M28B subfamily. Zn(2+) serves as cofactor.

It is found in the membrane. The enzyme catalyses Release of an unsubstituted, C-terminal glutamyl residue, typically from Ac-Asp-Glu or folylpoly-gamma-glutamates.. This is Glutamate carboxypeptidase 2 homolog from Caenorhabditis briggsae.